The primary structure comprises 505 residues: ATP synthase subunit alpha (505 aa).

169–176 (GDRQIGKT) contributes to the ATP binding site.

This sequence belongs to the ATPase alpha/beta chains family. In terms of assembly, F-type ATPases have 2 components, CF(1) - the catalytic core - and CF(0) - the membrane proton channel. CF(1) has five subunits: alpha(3), beta(3), gamma(1), delta(1), epsilon(1). CF(0) has three main subunits: a(1), b(2) and c(9-12). The alpha and beta chains form an alternating ring which encloses part of the gamma chain. CF(1) is attached to CF(0) by a central stalk formed by the gamma and epsilon chains, while a peripheral stalk is formed by the delta and b chains.

The protein localises to the cell inner membrane. It catalyses the reaction ATP + H2O + 4 H(+)(in) = ADP + phosphate + 5 H(+)(out). Functionally, produces ATP from ADP in the presence of a proton gradient across the membrane. The alpha chain is a regulatory subunit. This is ATP synthase subunit alpha from Desulfosudis oleivorans (strain DSM 6200 / JCM 39069 / Hxd3) (Desulfococcus oleovorans).